The primary structure comprises 146 residues: MLILDRILGQASDPALADRLHDLSHAGQVETLSLSGSDIQRHRLRLASDRGTDCAIRLERHQQLRNGSVLMLDSQRAIVVQMQDQQYLDLQPRDAAAALELGYFAGNMHWAVRFAGDTLQILLNGPEADYLERLAPMLADGRVQRA.

The protein belongs to the UreE family.

Its subcellular location is the cytoplasm. Involved in urease metallocenter assembly. Binds nickel. Probably functions as a nickel donor during metallocenter assembly. The sequence is that of Urease accessory protein UreE 1 from Pseudomonas syringae pv. syringae (strain B728a).